The chain runs to 251 residues: Triosephosphate isomerase (251 aa).

Residue 9–11 participates in substrate binding; that stretch reads NWK. Histidine 95 serves as the catalytic Electrophile. The Proton acceptor role is filled by glutamate 167. Substrate-binding positions include glycine 173, serine 212, and 233-234; that span reads GG.

It belongs to the triosephosphate isomerase family. Homodimer.

The protein resides in the cytoplasm. It carries out the reaction D-glyceraldehyde 3-phosphate = dihydroxyacetone phosphate. It participates in carbohydrate biosynthesis; gluconeogenesis. It functions in the pathway carbohydrate degradation; glycolysis; D-glyceraldehyde 3-phosphate from glycerone phosphate: step 1/1. Involved in the gluconeogenesis. Catalyzes stereospecifically the conversion of dihydroxyacetone phosphate (DHAP) to D-glyceraldehyde-3-phosphate (G3P). The protein is Triosephosphate isomerase of Pseudomonas entomophila (strain L48).